An 805-amino-acid chain; its full sequence is Transitional endoplasmic reticulum ATPase (805 aa).

Position 3 is a phosphoserine (Ser-3). ATP is bound by residues 247–253 (PGTGKTL), Asn-348, His-384, and 521–526 (GCGKTL). The interval 768 to 805 (FGSFRFPAGGQGGAGPSQGAGGGSGGSHFNEEEDDLYG) is disordered. The span at 776–793 (GGQGGAGPSQGAGGGSGG) shows a compositional bias: gly residues.

This sequence belongs to the AAA ATPase family. In terms of assembly, homohexamer. Forms a ring-shaped particle of 12.5 nm diameter, that displays 6-fold radial symmetry. Interacts with the FACT/DUF complex, which includes subunits ssrp1/duf87 and supt16h/duf140. In terms of processing, phosphorylated.

Its subcellular location is the cytoplasm. It is found in the cytosol. The protein resides in the endoplasmic reticulum. The protein localises to the nucleus. It localises to the stress granule. It catalyses the reaction ATP + H2O = ADP + phosphate + H(+). ATPase activity is inhibited or reduced by lowering pH from 9.0 to 7.0, and by addition of Ca(2+), EDTA, KNO(3) or by treatment with N-ethylmaleimide (NEM). Its function is as follows. Necessary for the fragmentation of Golgi stacks during mitosis and for their reassembly after mitosis. Involved in the formation of the nuclear envelope, and of the transitional endoplasmic reticulum (tER). The transfer of membranes from the endoplasmic reticulum to the Golgi apparatus occurs via 50-70 nm transition vesicles which derive from part-rough, part-smooth transitional elements of the endoplasmic reticulum (tER). Vesicle budding from the tER is an ATP-dependent process. Involved in endoplasmic reticulum stress-induced pre-emptive quality control, a mechanism that selectively attenuates the translocation of newly synthesized proteins into the endoplasmic reticulum and reroutes them to the cytosol for proteasomal degradation. Involved in clearance process by mediating G3BP1 extraction from stress granules. Also involved in DNA damage response: recruited to double-strand breaks (DSBs) sites and promotes the recruitment of tp53bp1 at DNA damage sites. Together with sprtn metalloprotease, involved in the repair of covalent DNA-protein cross-links (DPCs) during DNA synthesis. Involved in interstrand cross-link repair in response to replication stress by mediating unloading of the ubiquitinated CMG helicase complex. Enhances cell cycle progression and inhibits apoptosis at low temperatures. Essential for the maturation of ubiquitin-containing autophagosomes and the clearance of ubiquitinated protein by autophagy. Acts as a negative regulator of type I interferon production by promoting ubiquitination of rigi. May play a role in the ubiquitin-dependent sorting of membrane proteins to lysosomes where they undergo degradation. May more particularly play a role in caveolins sorting in cells. By controlling the steady-state expression of the IGF1R receptor, indirectly regulates the insulin-like growth factor receptor signaling pathway. The polypeptide is Transitional endoplasmic reticulum ATPase (Xenopus tropicalis (Western clawed frog)).